Consider the following 87-residue polypeptide: UPF0213 protein SSA_0709 (87 aa).

The GIY-YIG domain maps to 3–78; sequence NKAYMYVLEC…KKKTRQAKLA (76 aa).

Belongs to the UPF0213 family.

The sequence is that of UPF0213 protein SSA_0709 from Streptococcus sanguinis (strain SK36).